The chain runs to 179 residues: MFPMVTGFMNYGQQTVRAARYIGQSFMITLSHANRLPVTIQYPYEKSITSERFRGRIHFEFDKCIACEVCVRVCPIDLPVVDWRLETDIRKKRLLNYSIDFGICIFCGNCVEYCPTNCLSMTEEYELSTYDRHELNYNQIALGRLPMSVIGDYTVRTIMNSTQIKISMDKSLDSRTITN.

2 4Fe-4S ferredoxin-type domains span residues 55–84 and 95–124; these read GRIHFEFDKCIACEVCVRVCPIDLPVVDWR and LNYSIDFGICIFCGNCVEYCPTNCLSMTEE. [4Fe-4S] cluster is bound by residues C64, C67, C70, C74, C104, C107, C110, and C114.

It belongs to the complex I 23 kDa subunit family. As to quaternary structure, NDH is composed of at least 16 different subunits, 5 of which are encoded in the nucleus. Requires [4Fe-4S] cluster as cofactor.

Its subcellular location is the plastid. It is found in the chloroplast thylakoid membrane. It carries out the reaction a plastoquinone + NADH + (n+1) H(+)(in) = a plastoquinol + NAD(+) + n H(+)(out). The catalysed reaction is a plastoquinone + NADPH + (n+1) H(+)(in) = a plastoquinol + NADP(+) + n H(+)(out). NDH shuttles electrons from NAD(P)H:plastoquinone, via FMN and iron-sulfur (Fe-S) centers, to quinones in the photosynthetic chain and possibly in a chloroplast respiratory chain. The immediate electron acceptor for the enzyme in this species is believed to be plastoquinone. Couples the redox reaction to proton translocation, and thus conserves the redox energy in a proton gradient. This is NAD(P)H-quinone oxidoreductase subunit I, chloroplastic from Nuphar advena (Common spatterdock).